Consider the following 474-residue polypeptide: Pyruvate kinase (474 aa).

Substrate is bound at residue Arg33. The K(+) site is built by Asn35, Ser37, and Asp67. Asn35–His38 contacts ATP. Positions 74 and 155 each coordinate ATP. Mg(2+) is bound at residue Glu220. Substrate is bound by residues Gly243, Asp244, and Thr276. Asp244 lines the Mg(2+) pocket.

The protein belongs to the pyruvate kinase family. As to quaternary structure, homotetramer. Mg(2+) serves as cofactor. It depends on K(+) as a cofactor.

It catalyses the reaction pyruvate + ATP = phosphoenolpyruvate + ADP + H(+). It functions in the pathway carbohydrate degradation; glycolysis; pyruvate from D-glyceraldehyde 3-phosphate: step 5/5. This is Pyruvate kinase (pyk) from Corynebacterium efficiens (strain DSM 44549 / YS-314 / AJ 12310 / JCM 11189 / NBRC 100395).